Reading from the N-terminus, the 273-residue chain is Transmembrane protein 45A (273 aa).

Helical transmembrane passes span 8-27 (ALPG…KNIL), 55-79 (VVVL…ALIL), 108-131 (IICF…AIFV), 153-171 (LLVF…EFLV), and 217-236 (MFLS…LIGV).

It belongs to the TMEM45 family.

It localises to the membrane. The polypeptide is Transmembrane protein 45A (Tmem45a) (Mus musculus (Mouse)).